The following is a 378-amino-acid chain: Ribosomal RNA large subunit methyltransferase G (378 aa).

Belongs to the methyltransferase superfamily. RlmG family.

It is found in the cytoplasm. It carries out the reaction guanosine(1835) in 23S rRNA + S-adenosyl-L-methionine = N(2)-methylguanosine(1835) in 23S rRNA + S-adenosyl-L-homocysteine + H(+). Specifically methylates the guanine in position 1835 (m2G1835) of 23S rRNA. The protein is Ribosomal RNA large subunit methyltransferase G of Shewanella baltica (strain OS185).